A 921-amino-acid polypeptide reads, in one-letter code: 2-oxoadipate dehydrogenase complex component E1 (921 aa).

N6-succinyllysine occurs at positions 184 and 189. The tract at residues 300 to 319 (GKTRGRQQSREDGDYSPNGS) is disordered. N6-succinyllysine is present on residues lysine 801 and lysine 819.

This sequence belongs to the alpha-ketoglutarate dehydrogenase family. As to quaternary structure, the 2-oxoadipate dehydrogenase complex is composed of OADH (2-oxoadipate dehydrogenase; E1a), DLST (dihydrolipoamide succinyltransferase; E2) and DLD (dihydrolipoamide dehydrogenase; E3). E1a functional unit is a dimer. Thiamine diphosphate serves as cofactor.

It is found in the mitochondrion. It catalyses the reaction N(6)-[(R)-lipoyl]-L-lysyl-[protein] + 2-oxoadipate + H(+) = N(6)-[(R)-S(8)-glutaryldihydrolipoyl]-L-lysyl-[protein] + CO2. Its pathway is amino-acid degradation. Its function is as follows. 2-oxoadipate dehydrogenase (E1a) component of the 2-oxoadipate dehydrogenase complex (OADHC). Participates in the first step, rate limiting for the overall conversion of 2-oxoadipate (alpha-ketoadipate) to glutaryl-CoA and CO(2) catalyzed by the whole OADHC. Catalyzes the irreversible decarboxylation of 2-oxoadipate via the thiamine diphosphate (ThDP) cofactor and subsequent transfer of the decarboxylated acyl intermediate on an oxidized dihydrolipoyl group that is covalently amidated to the E2 enzyme (dihydrolipoyllysine-residue succinyltransferase or DLST). Can catalyze the decarboxylation of 2-oxoglutarate in vitro, but at a much lower rate than 2-oxoadipate. Responsible for the last step of L-lysine, L-hydroxylysine and L-tryptophan catabolism with the common product being 2-oxoadipate. This Mus musculus (Mouse) protein is 2-oxoadipate dehydrogenase complex component E1 (Dhtkd1).